The sequence spans 206 residues: Protease (206 aa).

Catalysis depends on residues H54, D71, and C122.

Belongs to the peptidase C5 family. In terms of assembly, interacts with protease cofactor pVI-C; this interaction is necessary for protease activation.

Its subcellular location is the virion. It localises to the host nucleus. The catalysed reaction is Cleaves proteins of the adenovirus and its host cell at two consensus sites: -Yaa-Xaa-Gly-Gly-|-Xaa- and -Yaa-Xaa-Gly-Xaa-|-Gly- (in which Yaa is Met, Ile or Leu, and Xaa is any amino acid).. With respect to regulation, requires DNA and protease cofactor for maximal activation. Inside nascent virions, becomes partially activated by binding to the viral DNA, allowing it to cleave the cofactor that binds to the protease and fully activates it. Actin, like the viral protease cofactor, seems to act as a cofactor in the cleavage of cytokeratin 18 and of actin itself. Functionally, cleaves viral precursor proteins (pTP, pIIIa, pVI, pVII, pVIII, and pX) inside newly assembled particles giving rise to mature virions. Protease complexed to its cofactor slides along the viral DNA to specifically locate and cleave the viral precursors. Mature virions have a weakened organization compared to the unmature virions, thereby facilitating subsequent uncoating. Without maturation, the particle lacks infectivity and is unable to uncoat. Late in adenovirus infection, in the cytoplasm, may participate in the cytoskeleton destruction. Cleaves host cell cytoskeletal keratins K7 and K18. The chain is Protease from Homo sapiens (Human).